The following is a 358-amino-acid chain: Trace amine-associated receptor 7e (358 aa).

Residues 1–47 (MATGDDSFLWDQDSILSRDLFSATSAELCYENLNRSCVRSPYSPGPR) lie on the Extracellular side of the membrane. An N-linked (GlcNAc...) asparagine glycan is attached at N34. Disulfide bonds link C37-C201 and C120-C205. The chain crosses the membrane as a helical span at residues 48–68 (LILYAVFGFGAVLAVCGNLLV). The Cytoplasmic portion of the chain corresponds to 69–83 (MTSILHFRQLHSPAN). Residues 84–104 (FLVASLACADFLVGLTVMPFS) form a helical membrane-spanning segment. The Extracellular segment spans residues 105-121 (TVRSVEGCWYFGEIYCK). The chain crosses the membrane as a helical span at residues 122-143 (LHTCFDVSFCSSSIFHLCFISV). Over 144–166 (DRYIAVSDPLIYPTRFTASVSNK) the chain is Cytoplasmic. A helical transmembrane segment spans residues 167–187 (CITFSWLLSISYGFSLIYTGA). Topologically, residues 188–212 (SEAGLEDLVSALTCVGGCQLAVNQS) are extracellular. The N-linked (GlcNAc...) asparagine glycan is linked to N210. A helical transmembrane segment spans residues 213 to 233 (WVFINFLLFLIPTLVMITVYS). Topologically, residues 234-274 (KIFLIAKQQAQNIEKMSKQTARASDSYKDRVAKRERKAAKT) are cytoplasmic. The helical transmembrane segment at 275-295 (LGIAVAAFLLSWLPYFIDSFI) threads the bilayer. The Extracellular portion of the chain corresponds to 296–309 (DAFLGFITPTYVYE). A helical transmembrane segment spans residues 310-333 (ILVWIAYYNSAMNPLIYAFFYPWF). At 334-358 (RKAIKLTVTGKILRENSSTTNLFPE) the chain is on the cytoplasmic side.

Belongs to the G-protein coupled receptor 1 family. Specifically expressed in neurons of the olfactory epithelium.

Its subcellular location is the cell membrane. Its function is as follows. Olfactory receptor specific for N,N-dimethylalkylamines trace amines. Trace amine compounds are enriched in animal body fluids and act on trace amine-associated receptors (TAARs) to elicit both intraspecific and interspecific innate behaviors. Ligand-binding causes a conformation change that triggers signaling via G(s)-class of G alpha proteins (GNAL or GNAS). The polypeptide is Trace amine-associated receptor 7e (Mus musculus (Mouse)).